The chain runs to 728 residues: Catalase B (728 aa).

Active-site residues include histidine 107 and asparagine 180. Heme is bound at residue tyrosine 394.

Belongs to the catalase family. The cofactor is heme.

The protein resides in the secreted. It catalyses the reaction 2 H2O2 = O2 + 2 H2O. Functionally, occurs in almost all aerobically respiring organisms and serves to protect cells from the toxic effects of hydrogen peroxide. This is Catalase B (CATB) from Ajellomyces capsulatus (Darling's disease fungus).